The following is a 217-amino-acid chain: MRNPSISITPEGLPAIGLCTLATLTFALIGCWVMAVIFLLLTWFCCHFFRDPERVTPTGAGLAVSPADGRVIRVEPVTDPITGEKRTCVCIFMNVFNVHVNRMPVAGTIRNIVYHPGKFFNAAWDKAATDNERCDYLIEDAEGGKWTMVQIAGLIARRIVCRVDEGDTLTRGERYGMIRFGSRVDLYLPDGYCPTVSVGEHVFAGQTIVARKSPEGA.

Serine 182 functions as the Schiff-base intermediate with substrate; via pyruvic acid in the catalytic mechanism. Serine 182 is modified (pyruvic acid (Ser); by autocatalysis).

Belongs to the phosphatidylserine decarboxylase family. PSD-A subfamily. In terms of assembly, heterodimer of a large membrane-associated beta subunit and a small pyruvoyl-containing alpha subunit. Requires pyruvate as cofactor. In terms of processing, is synthesized initially as an inactive proenzyme. Formation of the active enzyme involves a self-maturation process in which the active site pyruvoyl group is generated from an internal serine residue via an autocatalytic post-translational modification. Two non-identical subunits are generated from the proenzyme in this reaction, and the pyruvate is formed at the N-terminus of the alpha chain, which is derived from the carboxyl end of the proenzyme. The post-translation cleavage follows an unusual pathway, termed non-hydrolytic serinolysis, in which the side chain hydroxyl group of the serine supplies its oxygen atom to form the C-terminus of the beta chain, while the remainder of the serine residue undergoes an oxidative deamination to produce ammonia and the pyruvoyl prosthetic group on the alpha chain.

The protein resides in the cell membrane. It catalyses the reaction a 1,2-diacyl-sn-glycero-3-phospho-L-serine + H(+) = a 1,2-diacyl-sn-glycero-3-phosphoethanolamine + CO2. It participates in phospholipid metabolism; phosphatidylethanolamine biosynthesis; phosphatidylethanolamine from CDP-diacylglycerol: step 2/2. Functionally, catalyzes the formation of phosphatidylethanolamine (PtdEtn) from phosphatidylserine (PtdSer). This Nitratidesulfovibrio vulgaris (strain ATCC 29579 / DSM 644 / CCUG 34227 / NCIMB 8303 / VKM B-1760 / Hildenborough) (Desulfovibrio vulgaris) protein is Phosphatidylserine decarboxylase proenzyme.